A 268-amino-acid chain; its full sequence is MRGAFYMAITLFLARSRSATAIDQLDVSQTYLNVGAIGGEGTKLTPKRYLRDGLALSAANEERVKANVLSKSAKTLAAEGEDWLRLSLGTGGHSHPPKSKRKVNLSLAKSKGGISKKVTTPKQRVYKRHFVSIDPRLPGYLKVHQTFRKIFGMPHEMSLTEAVLMYGMVNWKHGSSPATKKIIDSLLRLAERSNLADFERALDPMFVRIASLEEMQNEYFHSLQTMYAKVYAFCHAHPADCTNKKAVSPLERMIKAQRANVILPPVTH.

The signal sequence occupies residues 1-21 (MRGAFYMAITLFLARSRSATA). The RxLR-dEER motif lies at 48–63 (RYLRDGLALSAANEER). A glycan (N-linked (GlcNAc...) asparagine) is linked at N104.

Belongs to the RxLR effector family.

The protein localises to the secreted. The protein resides in the host nucleus. Effector that acts as a broad suppressor of cell death to interrupt plant immunity. Inhibits cell death induced by cell death-inducing proteins, including the PAMP elicitor INF1 from P.infestans. The protein is Secreted RxLR effector protein 5 of Plasmopara viticola (Downy mildew of grapevine).